The following is a 328-amino-acid chain: Arabinose 5-phosphate isomerase KdsD (328 aa).

The SIS domain maps to 41 to 184; it reads ACEKMFNCTG…AVALLKARGF (144 aa). Substrate contacts are provided by residues 75 to 76, His-82, His-88, 114 to 123, and 148 to 150; these read GT, ALIPVLKRLH, and KVP. Zn(2+) is bound at residue His-82. Positions 210 to 268 constitute a CBS 1 domain; that stretch reads MHTGDEIPHVNKHATLRDALLEITRKNLGMTVICDESMKIDGIFTDGDLRRVFDMGGDM. Glu-275 contacts substrate. The region spanning 277 to 328 is the CBS 2 domain; that stretch reads MTPGGIRVRPGILAVDALNLMQSRHITSVLVADGDQLLGVLHMHDLLRAGVV.

It belongs to the SIS family. GutQ/KpsF subfamily. Homotetramer.

The enzyme catalyses D-arabinose 5-phosphate = D-ribulose 5-phosphate. The protein operates within carbohydrate biosynthesis; 3-deoxy-D-manno-octulosonate biosynthesis; 3-deoxy-D-manno-octulosonate from D-ribulose 5-phosphate: step 1/3. It participates in bacterial outer membrane biogenesis; lipopolysaccharide biosynthesis. Functionally, involved in the biosynthesis of 3-deoxy-D-manno-octulosonate (KDO), a unique 8-carbon sugar component of lipopolysaccharides (LPSs). Catalyzes the reversible aldol-ketol isomerization between D-ribulose 5-phosphate (Ru5P) and D-arabinose 5-phosphate (A5P). In Salmonella typhimurium (strain LT2 / SGSC1412 / ATCC 700720), this protein is Arabinose 5-phosphate isomerase KdsD (kdsD).